The sequence spans 405 residues: MKEILTVTELNSYIANLLDSDPFLGQLWLRGEISGFRLYQQSGHMYFTLKDEDSTISAVMFKSRARGLKFKPKDGMEVLLRASVSVFARQGKYQLYVEEMQPYGIGGLFLYLEELKKKLAAKGYFAPERKKAIPAFVQRVGIVTSQDGAALRDICRILKQRHPGVEVVLAHSSVQGSEAPGELAEGLRLLNSYAEVELIIIGRGGGSYEDLMAFNSELVVQAIYESNIPVISAVGHEVDFTLADLVADLRAATPSQAASLAVADMQALSRQLDNYQQRLLRAMQRKLLYYTEIIDRLMMKRIWKQPRSLLHMREELLSQLEKSLSRGMAEIFREKKMKLSMNMAALDSLSPLKIMERGYVLLQKEGRIIRDEQQVQIGDRLEVAMRHADLEIEVIKKERVKRWKS.

The protein belongs to the XseA family. As to quaternary structure, heterooligomer composed of large and small subunits.

It is found in the cytoplasm. The catalysed reaction is Exonucleolytic cleavage in either 5'- to 3'- or 3'- to 5'-direction to yield nucleoside 5'-phosphates.. Its function is as follows. Bidirectionally degrades single-stranded DNA into large acid-insoluble oligonucleotides, which are then degraded further into small acid-soluble oligonucleotides. This is Exodeoxyribonuclease 7 large subunit from Syntrophomonas wolfei subsp. wolfei (strain DSM 2245B / Goettingen).